We begin with the raw amino-acid sequence, 28 residues long: Nicotinic acetylcholine receptor-binding protein Mnn-3C (28 aa).

Cysteines 3 and 24 form a disulfide.

The protein belongs to the three-finger toxin family. Short-chain subfamily. Expressed by the venom gland.

The protein localises to the secreted. Its function is as follows. Binds and may inhibit nicotinic acetylcholine receptors (nAChR). This Micrurus nigrocinctus (Central American coral snake) protein is Nicotinic acetylcholine receptor-binding protein Mnn-3C.